The chain runs to 40 residues: Beta-defensin 1 (40 aa).

3 disulfides stabilise this stretch: C7–C35, C14–C29, and C19–C36. Glycine amide is present on G40.

Monomer. Homodimer.

The protein resides in the secreted. The protein localises to the membrane. Functionally, has antimicrobial activity against the Gram-positive bacteria methicillin-resistant S.aureus ATCC 33591 and L.monocytogenes EGD, the Gram-negative bacterium E.coli ML53p and the yeast C.albicans 820. Has no hemolytic activity towards human erythrocytes. The polypeptide is Beta-defensin 1 (Emys orbicularis (European pond turtle)).